The following is a 35-amino-acid chain: Purotoxin-1 (35 aa).

4 disulfide bridges follow: C3–C16, C10–C21, C15–C32, and C23–C30.

It belongs to the neurotoxin 33 family. In terms of tissue distribution, expressed by the venom gland.

The protein localises to the secreted. Functionally, inhibits P2RX3 receptors. Has an analgesic effect in rat. Enhances the high-affinity desensitization of P2RX3 purinoceptors. At 50 nM, decreases the IC(50) for ambient ATP from 46.5 nM to 12.7 nM in mouse P2RX3. This is Purotoxin-1 from Alopecosa marikovskyi (Wolf spider).